The chain runs to 479 residues: Aryl-phospho-beta-D-glucosidase BglA (479 aa).

Glu176 functions as the Proton donor in the catalytic mechanism. Catalysis depends on Glu377, which acts as the Nucleophile.

Belongs to the glycosyl hydrolase 1 family.

The enzyme catalyses 6-phospho-beta-D-glucosyl-(1-&gt;4)-D-glucose + H2O = D-glucose 6-phosphate + D-glucose. Its function is as follows. Catalyzes the hydrolysis of aryl-phospho-beta-D-glucosides such as 4-methylumbelliferyl-phospho-beta-D-glucopyranoside (MUG-P), phosphoarbutin and phosphosalicin. Plays a major role in the utilization of arbutin or salicin as the sole carbon source. BglA and BglH are the major proteins contributing to hydrolysis of MUG-P by extracts of late-exponential-phase or stationary-phase B.subtilis cells. The sequence is that of Aryl-phospho-beta-D-glucosidase BglA (bglA) from Bacillus subtilis (strain 168).